The sequence spans 400 residues: Argininosuccinate synthase (400 aa).

ATP-binding positions include 11–19 (AYSGGLDTS) and A38. Positions 89 and 94 each coordinate L-citrulline. An ATP-binding site is contributed by G119. L-aspartate is bound by residues T121, N125, and D126. Position 125 (N125) interacts with L-citrulline. L-citrulline contacts are provided by R129, S178, S187, E263, and Y275.

It belongs to the argininosuccinate synthase family. Type 1 subfamily. In terms of assembly, homotetramer.

The protein localises to the cytoplasm. The enzyme catalyses L-citrulline + L-aspartate + ATP = 2-(N(omega)-L-arginino)succinate + AMP + diphosphate + H(+). The protein operates within amino-acid biosynthesis; L-arginine biosynthesis; L-arginine from L-ornithine and carbamoyl phosphate: step 2/3. The chain is Argininosuccinate synthase from Desulfatibacillum aliphaticivorans.